The following is a 111-amino-acid chain: Ribonuclease P protein component (111 aa).

It belongs to the RnpA family. Consists of a catalytic RNA component (M1 or rnpB) and a protein subunit.

The enzyme catalyses Endonucleolytic cleavage of RNA, removing 5'-extranucleotides from tRNA precursor.. Its function is as follows. RNaseP catalyzes the removal of the 5'-leader sequence from pre-tRNA to produce the mature 5'-terminus. It can also cleave other RNA substrates such as 4.5S RNA. The protein component plays an auxiliary but essential role in vivo by binding to the 5'-leader sequence and broadening the substrate specificity of the ribozyme. The polypeptide is Ribonuclease P protein component (Fusobacterium nucleatum subsp. nucleatum (strain ATCC 25586 / DSM 15643 / BCRC 10681 / CIP 101130 / JCM 8532 / KCTC 2640 / LMG 13131 / VPI 4355)).